Here is a 1597-residue protein sequence, read N- to C-terminus: Transmembrane protein 131-like (1597 aa).

Positions 1 to 40 are cleaved as a signal peptide; the sequence is MAGLRRPQSGAYRRTAAAVNLLLGVFQVLLSCCRPGGAQG. The Extracellular segment spans residues 41–869; sequence QAFEPLPNVV…VVPGPSWEES (829 aa). Asn-343, Asn-593, Asn-709, and Asn-846 each carry an N-linked (GlcNAc...) asparagine glycan. Positions 696 to 916 are required for Wnt-signaling inhibition and LRP6 degradation; that stretch reads DYGKVTSLIL…QNGSSSSQQN (221 aa). The helical transmembrane segment at 870 to 890 threads the bilayer; sequence FWRLTVFFVSLSLLGVILIAF. At 891–1597 the chain is on the cytoplasmic side; it reads QQAQYILMEF…SRDSSYCGNM (707 aa). The segment covering 907–917 has biased composition (low complexity); the sequence is QNGSSSSQQNG. 3 disordered regions span residues 907–928, 1096–1240, and 1252–1322; these read QNGS…SHPH, AELK…EQRL, and DGAG…SDCD. A compositionally biased stretch (basic residues) spans 1213 to 1222; that stretch reads RPCRRNKKRA. Low complexity predominate over residues 1223–1239; it reads SAQASSSPRPSEQSEQR. Basic and acidic residues predominate over residues 1269–1290; the sequence is PERREEDSYYQKSEKKCADKFC. Residues 1291–1319 are compositionally biased toward low complexity; the sequence is SDSSSDCGSSSGSVRASRGSWGSWSSSSS.

Belongs to the TMEM131 family.

It is found in the cell membrane. It localises to the endoplasmic reticulum. The protein localises to the cytoplasm. In terms of biological role, in its membrane-associated form, antagonizes canonical Wnt signaling by triggering lysosome-dependent degradation of Wnt-activated LRP6. Regulates thymocyte proliferation. This is Transmembrane protein 131-like from Mus musculus (Mouse).